Here is a 106-residue protein sequence, read N- to C-terminus: Thiosulfate sulfurtransferase GlpE (106 aa).

Positions 16–104 (REQGAVLVDV…WRTTYPQETV (89 aa)) constitute a Rhodanese domain. Cysteine 64 functions as the Cysteine persulfide intermediate in the catalytic mechanism.

The protein belongs to the GlpE family.

It is found in the cytoplasm. The catalysed reaction is thiosulfate + hydrogen cyanide = thiocyanate + sulfite + 2 H(+). It catalyses the reaction thiosulfate + [thioredoxin]-dithiol = [thioredoxin]-disulfide + hydrogen sulfide + sulfite + 2 H(+). In terms of biological role, transferase that catalyzes the transfer of sulfur from thiosulfate to thiophilic acceptors such as cyanide or dithiols. May function in a CysM-independent thiosulfate assimilation pathway by catalyzing the conversion of thiosulfate to sulfite, which can then be used for L-cysteine biosynthesis. The polypeptide is Thiosulfate sulfurtransferase GlpE (Pseudomonas syringae pv. syringae (strain B728a)).